A 653-amino-acid polypeptide reads, in one-letter code: Cell wall adhesin EAP1 (653 aa).

The signal sequence occupies residues 1–18 (MKVSQILPLAGAISVASG). Residues 19–146 (FWIPDFSNKQ…EYTTYCPLTS (128 aa)) are N-terminal cell-cell adhesion domain. A disordered region spans residues 144-267 (LTSTPATEST…TETASSTPVE (124 aa)). The span at 145–267 (TSTPATESTP…TETASSTPVE (123 aa)) shows a compositional bias: low complexity. 15 tandem repeats follow at residues 147 to 152 (TPATES), 153 to 158 (TPATES), 159 to 164 (TPATES), 165 to 170 (TPATES), 171 to 176 (TPATES), 177 to 182 (TPATES), 192 to 197 (TPATES), 198 to 203 (TPATES), 204 to 209 (TPATES), 210 to 215 (TPATES), 216 to 221 (TPATES), 222 to 227 (TPATES), 228 to 233 (TPATES), 234 to 248 (TPAT…STET), and 249 to 254 (TPATES). Residues 147–254 (TPATESTPAT…STETTPATES (108 aa)) form a 15 X 6 AA tandem repeats, Ser/Thr-rich region. Asn-323 carries an N-linked (GlcNAc...) asparagine glycan. Disordered regions lie at residues 324–540 (TSTP…TTQP) and 572–595 (EGGC…GPEV). 10 consecutive repeat copies span residues 326–345 (TPAA…GTET), 346–365 (TPAA…GTET), 366–389 (TPAA…GTET), 390–413 (TPAA…GTET), 414–433 (TPAA…GTET), 434–457 (TPAA…GTET), 458–477 (TPAA…GTET), 478–501 (TPAA…GTET), 502–521 (TPAA…GTET), and 522–541 (TPAA…TQPV). The 10 X 20 AA approximate tandem repeats stretch occupies residues 326–541 (TPAAPGTPVE…EATPVTTQPV (216 aa)). Composition is skewed to low complexity over residues 341–353 (PGTE…PGTP) and 361–538 (PGTE…PVTT). Over residues 579-590 (GQQTETSPSVPT) the composition is skewed to polar residues. Gly-632 is lipidated: GPI-anchor amidated glycine. Residues 633-653 (SGSALKKPYYGLAVAALVYFM) constitute a propeptide, removed in mature form.

This sequence belongs to the PGA18 family. The GPI-anchor is attached to the protein in the endoplasmic reticulum and serves to target the protein to the cell surface. There, the glucosamine-inositol phospholipid moiety is cleaved off and the GPI-modified mannoprotein is covalently attached via its lipidless GPI glycan remnant to the 1,6-beta-glucan of the outer cell wall layer.

The protein localises to the secreted. It is found in the cell wall. The protein resides in the membrane. Its function is as follows. Cell wall protein which mediates cell-cell and cell-substrate adhesion. Required for biofilm formation and plays a role in virulence. This chain is Cell wall adhesin EAP1 (EAP1), found in Candida albicans (strain SC5314 / ATCC MYA-2876) (Yeast).